Here is a 297-residue protein sequence, read N- to C-terminus: ER membrane protein complex subunit 2-A (297 aa).

3 TPR repeats span residues 87–120, 155–188, and 192–225; these read HRVKRLTGLRFEAMERYDDALQIYDRILQDDPTN, QEAWHELAELYINELDYAKAAFCLEELILTNPHN, and YQQFAEVKYTQGGLENLELSRKYFSQALKLNNHN.

This sequence belongs to the EMC2 family. As to quaternary structure, component of the ER membrane protein complex (EMC).

It localises to the endoplasmic reticulum membrane. In terms of biological role, part of the endoplasmic reticulum membrane protein complex (EMC) that enables the energy-independent insertion into endoplasmic reticulum membranes of newly synthesized membrane proteins. Preferentially accommodates proteins with transmembrane domains that are weakly hydrophobic or contain destabilizing features such as charged and aromatic residues. Involved in the cotranslational insertion of multi-pass membrane proteins in which stop-transfer membrane-anchor sequences become ER membrane spanning helices. It is also required for the post-translational insertion of tail-anchored/TA proteins in endoplasmic reticulum membranes. By mediating the proper cotranslational insertion of N-terminal transmembrane domains in an N-exo topology, with translocated N-terminus in the lumen of the ER, controls the topology of multi-pass membrane proteins. By regulating the insertion of various proteins in membranes, it is indirectly involved in many cellular processes. The sequence is that of ER membrane protein complex subunit 2-A (emc2-a) from Xenopus laevis (African clawed frog).